The sequence spans 147 residues: ATP synthase epsilon chain 2 (147 aa).

It belongs to the ATPase epsilon chain family. F-type ATPases have 2 components, CF(1) - the catalytic core - and CF(0) - the membrane proton channel. CF(1) has five subunits: alpha(3), beta(3), gamma(1), delta(1), epsilon(1). CF(0) has three main subunits: a, b and c.

Its subcellular location is the cell inner membrane. Produces ATP from ADP in the presence of a proton gradient across the membrane. The sequence is that of ATP synthase epsilon chain 2 from Photobacterium profundum (strain SS9).